The sequence spans 443 residues: MSEMTPREIVSELNKHIIGQDNAKRSVAIALRNRWRRMQLDEELRHEVTPKNILMIGPTGVGKTEIARRLAKLANAPFIKVEATKFTEVGYVGKEVDSIIRDLTDAAVKMVRVQAIEKNRYRAEELAEERILDVLVPPAKNNWGQTEQQQEPSAARQTFRKKLREGQLDDKEIEINLAAAPMGVEIMAPPGMEEMTSQLQSLFQNLGGQKQKPRKLKIKDAMKLLVEEEAAKLVNPEELKQDAIDAVEQHGIVFIDEIDKICKRGETSGPDVSREGVQRDLLPLVEGCTVSTKHGMVKTDHILFIASGAFQVAKPSDLIPELQGRLPIRVELQALTTSDFERILTEPNASVTVQYKALMATEGVNIEFTDSGIKRIAEAAWQVNETTENIGARRLHTVLERLMEEISYNASDLHGQNITIDAEYVSKHLDALVADEDLSRFIL.

ATP-binding positions include isoleucine 18, 60 to 65 (GVGKTE), aspartate 256, glutamate 321, and arginine 393.

The protein belongs to the ClpX chaperone family. HslU subfamily. A double ring-shaped homohexamer of HslV is capped on each side by a ring-shaped HslU homohexamer. The assembly of the HslU/HslV complex is dependent on binding of ATP.

Its subcellular location is the cytoplasm. In terms of biological role, ATPase subunit of a proteasome-like degradation complex; this subunit has chaperone activity. The binding of ATP and its subsequent hydrolysis by HslU are essential for unfolding of protein substrates subsequently hydrolyzed by HslV. HslU recognizes the N-terminal part of its protein substrates and unfolds these before they are guided to HslV for hydrolysis. The protein is ATP-dependent protease ATPase subunit HslU of Salmonella arizonae (strain ATCC BAA-731 / CDC346-86 / RSK2980).